The chain runs to 187 residues: Elongation factor P (187 aa).

It belongs to the elongation factor P family.

It localises to the cytoplasm. It functions in the pathway protein biosynthesis; polypeptide chain elongation. Involved in peptide bond synthesis. Stimulates efficient translation and peptide-bond synthesis on native or reconstituted 70S ribosomes in vitro. Probably functions indirectly by altering the affinity of the ribosome for aminoacyl-tRNA, thus increasing their reactivity as acceptors for peptidyl transferase. The sequence is that of Elongation factor P from Rhizorhabdus wittichii (strain DSM 6014 / CCUG 31198 / JCM 15750 / NBRC 105917 / EY 4224 / RW1) (Sphingomonas wittichii).